Here is a 138-residue protein sequence, read N- to C-terminus: Small ribosomal subunit protein uS11c (138 aa).

The tract at residues 1 to 23 (MAKPIPRIGSRRNGRIGSRKSAR) is disordered. Residues 9 to 23 (GSRRNGRIGSRKSAR) are compositionally biased toward basic residues.

Belongs to the universal ribosomal protein uS11 family. Part of the 30S ribosomal subunit.

The protein resides in the plastid. The protein localises to the chloroplast. The sequence is that of Small ribosomal subunit protein uS11c from Vitis vinifera (Grape).